The sequence spans 267 residues: Glucosamine-6-phosphate deaminase (267 aa).

The Proton acceptor; for enolization step role is filled by Asp-71. Asp-140 functions as the For ring-opening step in the catalytic mechanism. The active-site Proton acceptor; for ring-opening step is His-142. Glu-147 serves as the catalytic For ring-opening step.

This sequence belongs to the glucosamine/galactosamine-6-phosphate isomerase family. Homohexamer.

Its subcellular location is the cytoplasm. It catalyses the reaction alpha-D-glucosamine 6-phosphate + H2O = beta-D-fructose 6-phosphate + NH4(+). The protein operates within nucleotide-sugar biosynthesis; UDP-N-acetyl-alpha-D-glucosamine biosynthesis; alpha-D-glucosamine 6-phosphate from D-fructose 6-phosphate: step 1/1. Its function is as follows. Catalyzes the reversible conversion of alpha-D-glucosamine 6-phosphate (GlcN-6P) into beta-D-fructose 6-phosphate (Fru-6P) and ammonium ion, a regulatory reaction step in de novo uridine diphosphate-N-acetyl-alpha-D-glucosamine (UDP-GlcNAc) biosynthesis via hexosamine pathway. This chain is Glucosamine-6-phosphate deaminase, found in Caenorhabditis elegans.